The sequence spans 126 residues: Integrin alpha-M (126 aa).

N-linked (GlcNAc...) asparagine glycans are attached at residues asparagine 25, asparagine 78, and asparagine 106.

It belongs to the integrin alpha chain family. In terms of assembly, heterodimer of an alpha and a beta chain. ITGAM associates with ITGB2. Found in a complex with CD177 and ITGB2/CD18. Interacts with JAM3. Interacts with THBD. Interacts with TMEM268; this interaction inhibits ITGAM degradation via the endosome-lysosome pathway.

The protein resides in the cell membrane. It is found in the membrane raft. In terms of biological role, integrin ITGAM/ITGB2 is implicated in various adhesive interactions of monocytes, macrophages and granulocytes as well as in mediating the uptake of complement-coated particles. It is identical with CR-3, the receptor for the iC3b fragment of the third complement component. It probably recognizes the R-G-D peptide in C3b. Integrin ITGAM/ITGB2 is also a receptor for fibrinogen, factor X and ICAM1. It recognizes P1 and P2 peptides of fibrinogen gamma chain. Regulates neutrophil migration. In association with beta subunit ITGB2/CD18, required for CD177-PRTN3-mediated activation of TNF primed neutrophils. May regulate phagocytosis-induced apoptosis in extravasated neutrophils. May play a role in mast cell development. Required with TYROBP/DAP12 in microglia to control production of microglial superoxide ions which promote the neuronal apoptosis that occurs during brain development. In Cavia porcellus (Guinea pig), this protein is Integrin alpha-M (ITGAM).